The sequence spans 82 residues: Omega-conotoxin PnVIB (82 aa).

A signal peptide spans 1-22 (MKLTCMMIVAVLFLTAWTVVTA). Residues 23-52 (EPHSSNVLENLYLKAHHEMENPEASKLNTR) constitute a propeptide that is removed on maturation. Cystine bridges form between Cys56–Cys73, Cys63–Cys77, and Cys72–Cys81.

Expressed by the venom duct.

Its subcellular location is the secreted. Omega-conotoxins act at presynaptic membranes, they bind and block voltage-gated calcium channels (Cav). Acts on high voltage-activated (HVA) calcium currents in molluscan neurons. In Conus pennaceus (Feathered cone), this protein is Omega-conotoxin PnVIB.